The primary structure comprises 757 residues: MDVNPTLLFLKVPAQNAISTTFPYTGDPPYSHGTGTGYTMDTVNRTHQYSEKGKWTTNTETGAPQLNPIDGPLPEDNEPSGYAQTDCVLEAMAFLEESHPGIFENSCLETMEVVQQTRVDKLTQGRQTYDWTLNRNQPAATALANTIEVFRSNGLTANESGRLIDFLKDVMESMDKEEMEITTHFQRKRRVRDNMTKKMVTQRTIGKKKQRLNKRSYLIRALTLNTMTKDAERGKLKRRAIATPGMQIRGFVYFVETLARSICEKLEQSGLPVGGNEKKAKLANVVRKMMTNSQDTELSFTITGDNTKWNENQNPRMFLAMITYITRNQPEWFRNVLSIAPIMFSNKMARLGKGYMFESKSMKLRTQIPAEMLANIDLKYFNESTRKKIEKIRPLLIDGTASLSPGMMMGMFNMLSTVLGVSILNLGQKRYTKTTYWWDGLQSSDDFALIVNAPNHEGIQAGVDRFYRTCKLVGINMSKKKSYINRTGTFEFTSFFYRYGFVANFSMELPSFGVSGINESADMSIGVTVIKNNMINNDLGPATAQMALQLFIKDYRYTYRCHRGDTQIQTRRSFELKKLWEQTRSKAGLLVSDGGPNLYNIRNLHIPEVCLKWELMDEDYQGRLCNPLNPFVSHKEIESVNNAVVMPAHGPAKNMEYDAVATTHSWIPKRNRSILNTSQRGILEDEQMYQKCCNLFEKFFPSSSYRRPVGISSMVEAMVSRARIDARIDFESGRIKKEEFAEIMKICSTIEELRRQK.

Residues 50-82 (SEKGKWTTNTETGAPQLNPIDGPLPEDNEPSGY) are disordered. Over residues 55–64 (WTTNTETGAP) the composition is skewed to polar residues. 2 short sequence motifs (nuclear localization signal) span residues 187 to 195 (RKRRVRDNM) and 203 to 216 (RTIG…NKRS). Positions 249–256 (RGFVYFVE) are promoter-binding site. The 198-residue stretch at 286–483 (VRKMMTNSQD…GINMSKKKSY (198 aa)) folds into the RdRp catalytic domain.

It belongs to the influenza viruses polymerase PB1 family. As to quaternary structure, influenza RNA polymerase is composed of three subunits: PB1, PB2 and PA. Interacts (via N-terminus) with PA (via C-terminus). Interacts (via C-terminus) with PB2 (via N-terminus); this interaction is essential for transcription initiation. Phosphorylated by host PRKCA.

It localises to the host nucleus. The protein localises to the host cytoplasm. The catalysed reaction is RNA(n) + a ribonucleoside 5'-triphosphate = RNA(n+1) + diphosphate. Functionally, RNA-dependent RNA polymerase which is responsible for replication and transcription of virus RNA segments. The transcription of viral mRNAs occurs by a unique mechanism called cap-snatching. 5' methylated caps of cellular mRNAs are cleaved after 10-13 nucleotides by PA. In turn, these short capped RNAs are used as primers by PB1 for transcription of viral mRNAs. During virus replication, PB1 initiates RNA synthesis and copy vRNA into complementary RNA (cRNA) which in turn serves as a template for the production of more vRNAs. This chain is RNA-directed RNA polymerase catalytic subunit, found in Influenza A virus (strain A/Turkey/Minnesota/833/1980 H4N2).